Here is a 316-residue protein sequence, read N- to C-terminus: D-alanine--D-alanine ligase (316 aa).

The region spanning 112 to 310 is the ATP-grasp domain; sequence KTALKAHGLP…FGKLCRWLVE (199 aa). Residue 139-189 coordinates ATP; sequence MATPYVVKPNNEGSSVGVYLVNEAANGPPHLSDDMPDEVMVETYAPGRELT. Positions 261, 277, and 279 each coordinate Mg(2+).

The protein belongs to the D-alanine--D-alanine ligase family. Mg(2+) is required as a cofactor. It depends on Mn(2+) as a cofactor.

It is found in the cytoplasm. It carries out the reaction 2 D-alanine + ATP = D-alanyl-D-alanine + ADP + phosphate + H(+). The protein operates within cell wall biogenesis; peptidoglycan biosynthesis. Cell wall formation. The chain is D-alanine--D-alanine ligase from Jannaschia sp. (strain CCS1).